Reading from the N-terminus, the 386-residue chain is L-lactate dehydrogenase (386 aa).

Positions 1–380 (MIISAASDYR…SGDALSRVTR (380 aa)) constitute an FMN hydroxy acid dehydrogenase domain. Y24 provides a ligand contact to substrate. The FMN site is built by S106 and Q127. Substrate is bound at residue Y129. T155 is an FMN binding site. R164 is a binding site for substrate. Residue K251 coordinates FMN. Residue H275 is the Proton acceptor of the active site. R278 lines the substrate pocket. Residue 306 to 330 (DSGIRSGLDVVRMLALGADAVLLGR) coordinates FMN.

It belongs to the FMN-dependent alpha-hydroxy acid dehydrogenase family. Requires FMN as cofactor.

The protein localises to the cell inner membrane. The enzyme catalyses (S)-lactate + A = pyruvate + AH2. Its function is as follows. Catalyzes the conversion of L-lactate to pyruvate. Is coupled to the respiratory chain. In Xanthomonas campestris pv. campestris (strain B100), this protein is L-lactate dehydrogenase.